The primary structure comprises 467 residues: tRNA-2-methylthio-N(6)-dimethylallyladenosine synthase (467 aa).

The disordered stretch occupies residues 1–20 (MSDDTTQIEPAMAQETSPRA). The MTTase N-terminal domain maps to 23–143 (RKVFVKTYGC…LPNALARVRG (121 aa)). [4Fe-4S] cluster contacts are provided by cysteine 32, cysteine 68, cysteine 106, cysteine 184, cysteine 188, and cysteine 191. A Radical SAM core domain is found at 170–402 (RKRGVSAFLT…QALLSAQQYA (233 aa)). The 63-residue stretch at 405–467 (DSMIGRKMDV…TNSLIAQKLA (63 aa)) folds into the TRAM domain.

Belongs to the methylthiotransferase family. MiaB subfamily. In terms of assembly, monomer. Requires [4Fe-4S] cluster as cofactor.

It is found in the cytoplasm. The catalysed reaction is N(6)-dimethylallyladenosine(37) in tRNA + (sulfur carrier)-SH + AH2 + 2 S-adenosyl-L-methionine = 2-methylsulfanyl-N(6)-dimethylallyladenosine(37) in tRNA + (sulfur carrier)-H + 5'-deoxyadenosine + L-methionine + A + S-adenosyl-L-homocysteine + 2 H(+). Catalyzes the methylthiolation of N6-(dimethylallyl)adenosine (i(6)A), leading to the formation of 2-methylthio-N6-(dimethylallyl)adenosine (ms(2)i(6)A) at position 37 in tRNAs that read codons beginning with uridine. This Brucella suis (strain ATCC 23445 / NCTC 10510) protein is tRNA-2-methylthio-N(6)-dimethylallyladenosine synthase.